We begin with the raw amino-acid sequence, 482 residues long: Ribosomal RNA small subunit methyltransferase F (482 aa).

S-adenosyl-L-methionine is bound by residues 119-125 (ASAPGSK), Glu-143, Asp-170, and Asp-188. Catalysis depends on Cys-241, which acts as the Nucleophile.

The protein belongs to the class I-like SAM-binding methyltransferase superfamily. RsmB/NOP family.

It localises to the cytoplasm. It catalyses the reaction cytidine(1407) in 16S rRNA + S-adenosyl-L-methionine = 5-methylcytidine(1407) in 16S rRNA + S-adenosyl-L-homocysteine + H(+). Its function is as follows. Specifically methylates the cytosine at position 1407 (m5C1407) of 16S rRNA. The protein is Ribosomal RNA small subunit methyltransferase F of Shewanella sp. (strain ANA-3).